The following is a 188-amino-acid chain: GMP synthase [glutamine-hydrolyzing] subunit A (188 aa).

The 188-residue stretch at 1 to 188 folds into the Glutamine amidotransferase type-1 domain; sequence MIVIMDNGGQ…RNFAELCGEL (188 aa). Cys78 serves as the catalytic Nucleophile. Catalysis depends on residues His165 and Glu167.

Heterodimer composed of a glutamine amidotransferase subunit (A) and a GMP-binding subunit (B).

The catalysed reaction is XMP + L-glutamine + ATP + H2O = GMP + L-glutamate + AMP + diphosphate + 2 H(+). It functions in the pathway purine metabolism; GMP biosynthesis; GMP from XMP (L-Gln route): step 1/1. In terms of biological role, catalyzes the synthesis of GMP from XMP. In Thermococcus kodakarensis (strain ATCC BAA-918 / JCM 12380 / KOD1) (Pyrococcus kodakaraensis (strain KOD1)), this protein is GMP synthase [glutamine-hydrolyzing] subunit A.